The chain runs to 200 residues: Small ribosomal subunit protein uS4 (200 aa).

Residues 22–43 (TGKELERRPYAPGQHGPTQRKK) are disordered. In terms of domain architecture, S4 RNA-binding spans 92–170 (QRLDNIVYRL…VPEYVTFDAE (79 aa)).

This sequence belongs to the universal ribosomal protein uS4 family. In terms of assembly, part of the 30S ribosomal subunit. Contacts protein S5. The interaction surface between S4 and S5 is involved in control of translational fidelity.

Functionally, one of the primary rRNA binding proteins, it binds directly to 16S rRNA where it nucleates assembly of the body of the 30S subunit. Its function is as follows. With S5 and S12 plays an important role in translational accuracy. This Listeria monocytogenes serovar 1/2a (strain ATCC BAA-679 / EGD-e) protein is Small ribosomal subunit protein uS4.